We begin with the raw amino-acid sequence, 347 residues long: NADH-ubiquinone oxidoreductase chain 2 (347 aa).

9 helical membrane passes run 5 to 22, 26 to 45, 60 to 80, 150 to 170, 178 to 198, 200 to 220, 237 to 257, 274 to 294, and 327 to 347; these read ILAI…MVLI, WLTI…PILM, FLTQ…NLLL, NPNL…WGGL, ILAY…TYNP, LMLL…MLFM, LPLI…LPPL, DMAI…YFYM, and PPLI…LTLF.

The protein belongs to the complex I subunit 2 family. Core subunit of respiratory chain NADH dehydrogenase (Complex I) which is composed of 45 different subunits. Interacts with TMEM242.

It localises to the mitochondrion inner membrane. The enzyme catalyses a ubiquinone + NADH + 5 H(+)(in) = a ubiquinol + NAD(+) + 4 H(+)(out). Core subunit of the mitochondrial membrane respiratory chain NADH dehydrogenase (Complex I) which catalyzes electron transfer from NADH through the respiratory chain, using ubiquinone as an electron acceptor. Essential for the catalytic activity and assembly of complex I. The sequence is that of NADH-ubiquinone oxidoreductase chain 2 from Martes zibellina (Sable).